The primary structure comprises 141 residues: Hemoglobin subunit alpha-2 (141 aa).

Positions 1–141 (VLTEDDKNHV…VCKDLVSKYR (141 aa)) constitute a Globin domain. His-58 is an O2 binding site. Residue His-87 participates in heme b binding.

The protein belongs to the globin family. As to quaternary structure, the major hemoglobin component (HbIII) is a heterotetramer of two alpha-2 chains and two beta-1 chains. In terms of tissue distribution, red blood cells.

Involved in oxygen transport from the lung to the various peripheral tissues. This is Hemoglobin subunit alpha-2 from Varanus albigularis (White-throated monitor).